Here is a 146-residue protein sequence, read N- to C-terminus: MVKKVLLINGPNLNLLGTREPEKYGTTSLSDIEQAAIEQAKLKNNDSEVLVFQSNTEGFIIDRIHEAKRQGVGFVVINAGAYTHTSVGIRDALLGTAIPFIEVHITNVHQREPFRHQSYLSDKAVAVICGLGVYGYTAAIEYALNY.

The active-site Proton acceptor is Y24. Substrate is bound by residues N78, H84, and D91. Catalysis depends on H104, which acts as the Proton donor. Residues 105–106 and R115 each bind substrate; that span reads IT.

It belongs to the type-II 3-dehydroquinase family. As to quaternary structure, homododecamer. Adopts a ring-like structure, composed of an arrangement of two hexameric rings stacked on top of one another.

It catalyses the reaction 3-dehydroquinate = 3-dehydroshikimate + H2O. It participates in aromatic compound metabolism; 3,4-dihydroxybenzoate biosynthesis; 3,4-dihydroxybenzoate from 3-dehydroquinate: step 1/2. Its function is as follows. Is involved in the catabolism of quinate. Allows the utilization of quinate as carbon source via the beta-ketoadipate pathway. The protein is Catabolic 3-dehydroquinase of Candida albicans (strain SC5314 / ATCC MYA-2876) (Yeast).